Here is a 2034-residue protein sequence, read N- to C-terminus: Host cell factor 1 (2034 aa).

The residue at position 2 (Ala2) is an N-acetylalanine. At Ser6 the chain carries Phosphoserine. Kelch repeat units lie at residues 44 to 89 (LIVV…GFVC), 93 to 140 (RLLV…RLGH), 148 to 194 (KCYL…ITYG), 217 to 265 (KLVI…TIGN), and 266 to 313 (KMYV…LMDT). Residues Lys105, Lys163, and Lys244 each participate in a glycyl lysine isopeptide (Lys-Gly) (interchain with G-Cter in ubiquitin) cross-link. Lys282 is covalently cross-linked (Glycyl lysine isopeptide (Lys-Gly) (interchain with G-Cter in SUMO2)). Lys288 bears the N6-acetyllysine mark. Residue Lys363 forms a Glycyl lysine isopeptide (Lys-Gly) (interchain with G-Cter in ubiquitin) linkage. The Fibronectin type-III 1 domain maps to 366–469 (PPARVQLVRA…TIQVLPTVPG (104 aa)). The segment at 407-434 (ATATSPTPNPVPSVPANPPKSPAPAAAA) is disordered. At Ser411 the chain carries Phosphoserine. Residues 413 to 428 (TPNPVPSVPANPPKSP) are compositionally biased toward pro residues. The segment at 500–550 (LVTMRPASQAGKAPVTVTSLPASVRMVVPTQSAQGTVIGSNPQMSGMAALA) is required for interaction with OGT. Arg504 and Arg524 each carry omega-N-methylarginine. 3 positions are modified to phosphoserine: Ser598, Ser666, and Ser669. Residues 610 to 722 (LKTAAAQVGT…KGPLPAGTIL (113 aa)) are interaction with SIN3A. The interval 750–902 (ILGISSVSPS…SLAGAGAHST (153 aa)) is interaction with ZBTB17. Position 813 is an N6-acetyllysine (Lys813). Residues 813 to 912 (KIITAVPKIA…SASLATPITT (100 aa)) are interaction with GABP2. 3 HCF repeat repeats span residues 1010-1035 (TLVCSNPPCETHETGTTNTATTTVVA), 1072-1097 (VRVCSNPPCETHETGTTNTATTATSN), and 1101-1126 (QHGCSNPPCETHETGTTSTATTAMSS). An HCF repeat 4; degenerate repeat occupies 1156 to 1182 (RAQGTVKPPCQTQQTNMTSTTMTVQAT). 2 positions are modified to phosphoserine: Ser1204 and Ser1223. 4 disordered regions span residues 1221–1241 (GPSSKDVPTGRQPETYHTYTT), 1302–1374 (PCET…TTST), 1444–1477 (TVTSNMSSNQDPPPAASDQGEVASTQGDSTNITS), and 1491–1525 (RAVTTVTQSTPVPGPSVPPPEELQVSPGPRQQLPP). HCF repeat repeat units lie at residues 1295-1320 (TQVCSNPPCETHETGTTNTATTSNAG) and 1323-1348 (QRVCSNPPCETHETGTTHTATTATSN). Over residues 1308 to 1321 (TGTTNTATTSNAGS) the composition is skewed to low complexity. An HCF repeat 7; degenerate repeat occupies 1358 to 1383 (QQPASGHPCETHQTTSTGTTMSVSVG). One copy of the HCF repeat 8 repeat lies at 1423–1448 (QRVCSNPPCETHETGTTHTATTVTSN). Low complexity predominate over residues 1491-1501 (RAVTTVTQSTP). Thr1500 carries the phosphothreonine modification. Residues 1502–1511 (VPGPSVPPPE) show a composition bias toward pro residues. Phosphoserine occurs at positions 1506 and 1516. Positions 1693-1723 (IVLTQQELAALVQQQQQLQEAQAQAQQQHHL) form a coiled coil. Ser1782 carries the phosphoserine modification. 2 Fibronectin type-III domains span residues 1808 to 1899 (LPPP…TCLP) and 1901 to 2017 (FPGA…TSKD). Residues Lys1818 and Lys1819 each participate in a glycyl lysine isopeptide (Lys-Gly) (interchain with G-Cter in ubiquitin) cross-link. Ser1849 is subject to Phosphoserine. A disordered region spans residues 2005-2034 (ATQVRWLQETSKDSSGTKPASKRPMSSPEM). An N6-acetyllysine modification is found at Lys2016.

Composed predominantly of six polypeptides ranging from 110 to 150 kDa and a minor 300 kDa polypeptide. The majority of N- and C-terminal cleavage products remain tightly, albeit non-covalently, associated. Interacts with POU2F1, CREB3, ZBTB17, EGR2, E2F4, CREBZF, SP1, GABP2, Sin3 HDAC complex (SIN3A, HDAC1, HDAC2, SUDS3), SAP30, SIN3B and FHL2. Component of a MLL1 complex, composed of at least the core components KMT2A/MLL1, ASH2L, HCFC1, WDR5 and RBBP5, as well as the facultative components BACC1, CHD8, DPY30, E2F6, HCFC2, HSP70, INO80C, KANSL1, LAS1L, MAX, MCRS1, MEN1, MGA, KAT8, PELP1, PHF20, PRP31, RING2, RUVBL1, RUVBL2, SENP3, TAF1, TAF4, TAF6, TAF7, TAF9 and TEX10. Component of a THAP1/THAP3-HCFC1-OGT complex that is required for the regulation of the transcriptional activity of RRM1. Interacts directly with THAP3 (via its HBM). Interacts (via the Kelch-repeat domain) with THAP1 (via the HBM); the interaction recruits HCHC1 to the RRM1. Interacts with THAP7 and THAP11 (via the HMB). Interacts directly with OGT; the interaction, which requires the HCFC1 cleavage site domain, glycosylates and promotes the proteolytic processing of HCFC1, retains OGT in the nucleus and impacts the expression of herpes simplex virus immediate early viral genes. Component of the SET1 complex, at least composed of the catalytic subunit (SETD1A or SETD1B), WDR5, WDR82, RBBP5, ASH2L, CXXC1, HCFC1 and DPY30. Component of the NSL complex at least composed of MOF/KAT8, KANSL1, KANSL2, KANSL3, MCRS1, PHF20, OGT1/OGT, WDR5 and HCFC1. Component of a complex at least composed of ZNF335, HCFC1, CCAR2, EMSY, MKI67, RBBP5, ASH2L and WDR5; the complex is formed as a result of interactions between components of a nuclear receptor-mediated transcription complex and a histone methylation complex. Within the complex interacts with ZNF335. Interacts with TET2 and TET3. Interacts with HCFC1R1. Interacts with THAP11. Interacts (via Kelch domain) with KMT2E/MLL5 isoform 3 (via HBM motif). Interacts with E2F1. Accessory scaffold component of the polycomb repressive deubiquitinase (PR-DUB) complex, at least composed of BAP1, one of ASXL1, ASXL2 or (probably) ASXL3 and one of MBD5 or MBD6; the PR-DUB core associates with a number of accessory proteins, including FOXK1, FOXK2, KDM1B, HCFC1, YY1 and OGT. Interacts with YY1 (via Gly-rich region); the interaction is direct. Interacts with BAP1 (via HBM-like motif). In terms of processing, proteolytically cleaved at one or several PPCE--THET sites within the HCF repeats. Further cleavage of the primary N- and C-terminal chains results in a 'trimming' and accumulation of the smaller chains. Cleavage is promoted by O-glycosylation. O-glycosylated. GlcNAcylation by OGT promotes proteolytic processing. Post-translationally, ubiquitinated. Lys-1818 and Lys-1819 are ubiquitinated both via 'Lys-48'- and 'Lys-63'-linked polyubiquitin chains. BAP1 mediated deubiquitination of 'Lys-48'-linked polyubiquitin chains; deubiquitination by BAP1 does not seem to stabilize the protein.

The protein resides in the cytoplasm. The protein localises to the nucleus. Its function is as follows. Transcriptional coregulator. Serves as a scaffold protein, bridging interactions between transcription factors, including THAP11 and ZNF143, and transcriptional coregulators. Involved in control of the cell cycle. Also antagonizes transactivation by ZBTB17 and GABP2; represses ZBTB17 activation of the p15(INK4b) promoter and inhibits its ability to recruit p300. Coactivator for EGR2 and GABP2. Tethers the chromatin modifying Set1/Ash2 histone H3 'Lys-4' methyltransferase (H3K4me) and Sin3 histone deacetylase (HDAC) complexes (involved in the activation and repression of transcription, respectively) together. Component of a THAP1/THAP3-HCFC1-OGT complex that is required for the regulation of the transcriptional activity of RRM1. As part of the NSL complex it may be involved in acetylation of nucleosomal histone H4 on several lysine residues. Recruits KMT2E/MLL5 to E2F1 responsive promoters promoting transcriptional activation and thereby facilitates G1 to S phase transition. Modulates expression of homeobox protein PDX1, perhaps acting in concert with transcription factor E2F1, thereby regulating pancreatic beta-cell growth and glucose-stimulated insulin secretion. May negatively modulate transcriptional activity of FOXO3. This Rattus norvegicus (Rat) protein is Host cell factor 1.